The chain runs to 205 residues: Small ribosomal subunit protein uS4 (205 aa).

The segment at 26-46 is disordered; that stretch reads PVNRREYGPGQHGQRRKQKPS. The region spanning 94 to 157 is the S4 RNA-binding domain; that stretch reads RRLDAVVYRL…KQLAIVLDAV (64 aa).

Belongs to the universal ribosomal protein uS4 family. Part of the 30S ribosomal subunit. Contacts protein S5. The interaction surface between S4 and S5 is involved in control of translational fidelity.

In terms of biological role, one of the primary rRNA binding proteins, it binds directly to 16S rRNA where it nucleates assembly of the body of the 30S subunit. Functionally, with S5 and S12 plays an important role in translational accuracy. This chain is Small ribosomal subunit protein uS4, found in Gluconobacter oxydans (strain 621H) (Gluconobacter suboxydans).